The primary structure comprises 214 residues: UPF0056 membrane protein aq_540 (214 aa).

Transmembrane regions (helical) follow at residues 17-37 (FLSL…ISLM), 47-67 (VIAL…LISG), 73-93 (FMGI…FLIA), 122-142 (LIPL…VLVL), 153-173 (VALF…YSLS), and 185-205 (INLI…QFVV).

Belongs to the UPF0056 (MarC) family.

The protein resides in the cell membrane. The protein is UPF0056 membrane protein aq_540 of Aquifex aeolicus (strain VF5).